The following is a 131-amino-acid chain: Large ribosomal subunit protein uL18 (131 aa).

Belongs to the universal ribosomal protein uL18 family. In terms of assembly, part of the 50S ribosomal subunit; part of the 5S rRNA/L5/L18/L25 subcomplex. Contacts the 5S and 23S rRNAs.

In terms of biological role, this is one of the proteins that bind and probably mediate the attachment of the 5S RNA into the large ribosomal subunit, where it forms part of the central protuberance. The polypeptide is Large ribosomal subunit protein uL18 (Corynebacterium kroppenstedtii (strain DSM 44385 / JCM 11950 / CIP 105744 / CCUG 35717)).